A 324-amino-acid polypeptide reads, in one-letter code: MTLTKETRVTLNDGNMMPILGLGTYAAPDVPKSLAEEAVKTAIDVGYRHIDCAFITGNEMHIGNGIRSKISDGTVKREDIFYTGKLWCTYFSPDMVRKGLERSLRDVGMDYLDLFLMHWPVSLKPSGASDPSDKDKPFIYDNVDLCATWEALEARKDAGLVRSLGVSNFNRRQLERILNKPGLKYKPVCNQVECHVYLNQNKLHSYCKSKDIVLVTYSVLGSHRDRNWVDLSLPVLLDDPILNKIAAKYNRTSAEVAMRFILQKGIVVLAKSFTPARIKQNLGVFEFELKPEDMKTLESLDRNLHYGPFREVKQHPEYPFHDEY.

Thr2 carries the post-translational modification N-acetylthreonine. Residue 218 to 281 (SVLGSHRDRN…SFTPARIKQN (64 aa)) participates in NADP(+) binding.

This sequence belongs to the aldo/keto reductase family. As to quaternary structure, monomer.

The chain is Rho crystallin from Aquarana catesbeiana (American bullfrog).